Consider the following 621-residue polypeptide: UvrABC system protein C (621 aa).

The region spanning 13–92 (EKPGVYMMRN…IKENRPKYNV (80 aa)) is the GIY-YIG domain. In terms of domain architecture, UVR spans 205 to 240 (DELVRKIEEKMKAAAISMDFENAARYRDQIIALNNI).

The protein belongs to the UvrC family. In terms of assembly, interacts with UvrB in an incision complex.

It localises to the cytoplasm. The UvrABC repair system catalyzes the recognition and processing of DNA lesions. UvrC both incises the 5' and 3' sides of the lesion. The N-terminal half is responsible for the 3' incision and the C-terminal half is responsible for the 5' incision. This Alkaliphilus oremlandii (strain OhILAs) (Clostridium oremlandii (strain OhILAs)) protein is UvrABC system protein C.